Here is a 60-residue protein sequence, read N- to C-terminus: DNA-directed RNA polymerase subunit Rpo6 (60 aa).

Belongs to the archaeal Rpo6/eukaryotic RPB6 RNA polymerase subunit family. Part of the RNA polymerase complex.

The protein localises to the cytoplasm. The enzyme catalyses RNA(n) + a ribonucleoside 5'-triphosphate = RNA(n+1) + diphosphate. Functionally, DNA-dependent RNA polymerase (RNAP) catalyzes the transcription of DNA into RNA using the four ribonucleoside triphosphates as substrates. The chain is DNA-directed RNA polymerase subunit Rpo6 from Picrophilus torridus (strain ATCC 700027 / DSM 9790 / JCM 10055 / NBRC 100828 / KAW 2/3).